Consider the following 346-residue polypeptide: Probable disease resistance protein At5g45440 (346 aa).

An NB-ARC domain is found at 38–116 (KQVEDRVETD…AYAPRIWVSM (79 aa)). 85-92 (GEYGVGKT) is an ATP binding site. Residues 315 to 346 (FDDGKANQNGSKDGKTDSVDNPNSEESKTKPL) are disordered.

In terms of biological role, possible disease resistance protein. In Arabidopsis thaliana (Mouse-ear cress), this protein is Probable disease resistance protein At5g45440.